The chain runs to 906 residues: Protein translocase subunit SecA (906 aa).

Residues Gln-86, 104–108 (GEGKT), and Asp-499 each bind ATP. Cys-890, Cys-892, Cys-901, and His-902 together coordinate Zn(2+).

The protein belongs to the SecA family. In terms of assembly, monomer and homodimer. Part of the essential Sec protein translocation apparatus which comprises SecA, SecYEG and auxiliary proteins SecDF-YajC and YidC. It depends on Zn(2+) as a cofactor.

The protein resides in the cell inner membrane. Its subcellular location is the cytoplasm. The enzyme catalyses ATP + H2O + cellular proteinSide 1 = ADP + phosphate + cellular proteinSide 2.. Functionally, part of the Sec protein translocase complex. Interacts with the SecYEG preprotein conducting channel. Has a central role in coupling the hydrolysis of ATP to the transfer of proteins into and across the cell membrane, serving both as a receptor for the preprotein-SecB complex and as an ATP-driven molecular motor driving the stepwise translocation of polypeptide chains across the membrane. This is Protein translocase subunit SecA from Rickettsia prowazekii (strain Madrid E).